The sequence spans 568 residues: Potassium-transporting ATPase potassium-binding subunit (568 aa).

A run of 10 helical transmembrane segments spans residues 3–23 (TEIL…YPLG), 64–84 (FLKA…VLLV), 133–153 (FVIM…MAGI), 179–199 (ILLP…TPMG), 255–275 (MVEC…LGFY), 281–301 (LAYS…CINV), 375–395 (FGGV…AVFI), 418–438 (IATI…AISS), 497–517 (IVLI…AGLL), and 536–556 (TFGI…FFPV).

It belongs to the KdpA family. As to quaternary structure, the system is composed of three essential subunits: KdpA, KdpB and KdpC.

The protein resides in the cell inner membrane. In terms of biological role, part of the high-affinity ATP-driven potassium transport (or Kdp) system, which catalyzes the hydrolysis of ATP coupled with the electrogenic transport of potassium into the cytoplasm. This subunit binds the periplasmic potassium ions and delivers the ions to the membrane domain of KdpB through an intramembrane tunnel. In Bacteroides thetaiotaomicron (strain ATCC 29148 / DSM 2079 / JCM 5827 / CCUG 10774 / NCTC 10582 / VPI-5482 / E50), this protein is Potassium-transporting ATPase potassium-binding subunit.